Consider the following 207-residue polypeptide: MFFVTPAYAEEAPAAATGTDAHAAPAAGEVHTETGVAEGEHARGPFPPFDSTTYASQLLWLVITFGVFYLLMQKVIAPRIGAILDQRHKRISQDLEEAGRLKAEADAAVQTYEGELAAARAKSHAIGSAARDAAKVKAEEDRRTVEASLSEKIKAAEARIADIKAKAFADVGTIAEETAAAVVEQLIGSTAAQADVAAAVAAAKKEV.

A helical transmembrane segment spans residues Thr53 to Met72.

The protein belongs to the ATPase B chain family. As to quaternary structure, F-type ATPases have 2 components, F(1) - the catalytic core - and F(0) - the membrane proton channel. F(1) has five subunits: alpha(3), beta(3), gamma(1), delta(1), epsilon(1). F(0) has three main subunits: a(1), b(2) and c(10-14). The alpha and beta chains form an alternating ring which encloses part of the gamma chain. F(1) is attached to F(0) by a central stalk formed by the gamma and epsilon chains, while a peripheral stalk is formed by the delta and b chains.

It localises to the cell inner membrane. F(1)F(0) ATP synthase produces ATP from ADP in the presence of a proton or sodium gradient. F-type ATPases consist of two structural domains, F(1) containing the extramembraneous catalytic core and F(0) containing the membrane proton channel, linked together by a central stalk and a peripheral stalk. During catalysis, ATP synthesis in the catalytic domain of F(1) is coupled via a rotary mechanism of the central stalk subunits to proton translocation. In terms of biological role, component of the F(0) channel, it forms part of the peripheral stalk, linking F(1) to F(0). The b'-subunit is a diverged and duplicated form of b found in plants and photosynthetic bacteria. The protein is ATP synthase subunit b 2 (atpF2) of Rhizobium etli (strain ATCC 51251 / DSM 11541 / JCM 21823 / NBRC 15573 / CFN 42).